The chain runs to 171 residues: MVVAVYPGTFDPLTRGHEDLVRRASSIFDTLVVGVADSRNKKPFFTLEERLDIAHEVLGHYPNVQVMSFKGLLKDFVRSNNARVIVRGLRAVSDFEYEFQMAGMNRYLLPDVETMFMTPSDQYQFISGTIVREIAQLGGDVSKFVFPSVEQWLKEKVAALDPANGASAAQP.

A substrate-binding site is contributed by Thr9. ATP contacts are provided by residues 9 to 10 and His17; that span reads TF. The substrate site is built by Lys41, Leu73, and Arg87. ATP contacts are provided by residues 88-90, Glu98, and 123-129; these read GLR and YQFISGT.

This sequence belongs to the bacterial CoaD family. As to quaternary structure, homohexamer. The cofactor is Mg(2+).

The protein localises to the cytoplasm. The catalysed reaction is (R)-4'-phosphopantetheine + ATP + H(+) = 3'-dephospho-CoA + diphosphate. It participates in cofactor biosynthesis; coenzyme A biosynthesis; CoA from (R)-pantothenate: step 4/5. Its function is as follows. Reversibly transfers an adenylyl group from ATP to 4'-phosphopantetheine, yielding dephospho-CoA (dPCoA) and pyrophosphate. In Paraburkholderia xenovorans (strain LB400), this protein is Phosphopantetheine adenylyltransferase.